The primary structure comprises 264 residues: 3-methyl-2-oxobutanoate hydroxymethyltransferase (264 aa).

Residues D45 and D84 each contribute to the Mg(2+) site. 3-methyl-2-oxobutanoate is bound by residues 45–46 (DS), D84, and K112. Residue E114 coordinates Mg(2+). Catalysis depends on E181, which acts as the Proton acceptor.

The protein belongs to the PanB family. As to quaternary structure, homodecamer; pentamer of dimers. Requires Mg(2+) as cofactor.

It is found in the cytoplasm. It catalyses the reaction 3-methyl-2-oxobutanoate + (6R)-5,10-methylene-5,6,7,8-tetrahydrofolate + H2O = 2-dehydropantoate + (6S)-5,6,7,8-tetrahydrofolate. It participates in cofactor biosynthesis; (R)-pantothenate biosynthesis; (R)-pantoate from 3-methyl-2-oxobutanoate: step 1/2. Functionally, catalyzes the reversible reaction in which hydroxymethyl group from 5,10-methylenetetrahydrofolate is transferred onto alpha-ketoisovalerate to form ketopantoate. The polypeptide is 3-methyl-2-oxobutanoate hydroxymethyltransferase (Shigella boydii serotype 18 (strain CDC 3083-94 / BS512)).